The following is a 228-amino-acid chain: N-acylneuraminate cytidylyltransferase (228 aa).

Belongs to the CMP-NeuNAc synthase family.

Its subcellular location is the cytoplasm. The catalysed reaction is an N-acylneuraminate + CTP = a CMP-N-acyl-beta-neuraminate + diphosphate. This is N-acylneuraminate cytidylyltransferase (neuA) from Neisseria meningitidis serogroup B (strain ATCC BAA-335 / MC58).